The chain runs to 123 residues: MKDQGRSTRKRTGGRLKHASNKKRHQLGREPAETTVGETRVQYIDSRGNEKKVRALSTNVAQVADGDAVSEAEIENVVDNPSNVNYARRNIITKGAIIETSAGRARVSSRPGQTGQVNAVLID.

A disordered region spans residues 1–37; sequence MKDQGRSTRKRTGGRLKHASNKKRHQLGREPAETTVG. Residues 7 to 26 show a composition bias toward basic residues; sequence STRKRTGGRLKHASNKKRHQ.

It belongs to the eukaryotic ribosomal protein eS8 family. As to quaternary structure, part of the 30S ribosomal subunit.

This Halorubrum lacusprofundi (strain ATCC 49239 / DSM 5036 / JCM 8891 / ACAM 34) protein is Small ribosomal subunit protein eS8.